We begin with the raw amino-acid sequence, 613 residues long: TANK-binding kinase 1-binding protein 1 (613 aa).

Residues 1–280 (MESMFEDDIS…QDLASNQSEC (280 aa)) are homodimerization. Positions 48–162 (YGDIKERLGG…ALVETHLRQI (115 aa)) form a coiled coil. At Ser184 the chain carries Phosphoserine. A coiled-coil region spans residues 218-277 (TSVSVSELERRRLEEALEAAQGEARGAQLREEQLQAECERLQGELKQLQETRAQDLASNQ). The interval 281–330 (GMAWVKRVGDDQVNLALAYTELTEELGRLRELSSLQGRILRTLLQEQARN) is interaction with TBK1 and IKBKE. The segment at 328–457 (ARNAGQRHSP…HHAKAGFQGR (130 aa)) is disordered. Pro residues predominate over residues 346 to 361 (PACPSPSPPARPPPCA). Residues 362 to 372 (PCQSPAAQRRS) show a composition bias toward low complexity. Phosphoserine is present on residues Ser365, Ser372, Ser379, Ser385, Ser400, and Ser415. The segment covering 389–406 (PSCPSPVPQRRSPVPPSC) has biased composition (pro residues). Residues 416 to 433 (PVPPSCPAPQPRPPPPPG) are compositionally biased toward pro residues. Phosphoserine occurs at positions 502 and 532. The UBZ1-type zinc-finger motif lies at 581-607 (IRSCPLCQLGFPVGYPDDALIKHIDSH). Residues Cys584, Cys587, His603, and His607 each coordinate Zn(2+).

Homodimer. May form a heterodimer with NAP1. Interacts with TKB1 and IKBKE. Weakly interacts with DDX3X.

In terms of biological role, adapter protein which constitutively binds TBK1 and IKBKE playing a role in antiviral innate immunity. Essential for the efficient induction of IRF-dependent transcription following infection with Sendai virus. The chain is TANK-binding kinase 1-binding protein 1 from Rattus norvegicus (Rat).